The chain runs to 57 residues: Large ribosomal subunit protein eL20 (57 aa).

This sequence belongs to the eukaryotic ribosomal protein eL20 family. In terms of assembly, part of the 50S ribosomal subunit. Binds 23S rRNA.

The sequence is that of Large ribosomal subunit protein eL20 from Halorhabdus utahensis (strain DSM 12940 / JCM 11049 / AX-2).